The sequence spans 503 residues: Anthranilate synthase component 1 3 (503 aa).

269–271 (PYS) provides a ligand contact to L-tryptophan. Residue 304 to 305 (GT) participates in chorismate binding. Glu331 contacts Mg(2+). Chorismate is bound by residues Tyr419, Arg439, 453-455 (GSG), and Gly455. Glu468 is a Mg(2+) binding site.

The protein belongs to the anthranilate synthase component I family. Tetramer of two components I and two components II. Mg(2+) is required as a cofactor.

The enzyme catalyses chorismate + L-glutamine = anthranilate + pyruvate + L-glutamate + H(+). It functions in the pathway amino-acid biosynthesis; L-tryptophan biosynthesis; L-tryptophan from chorismate: step 1/5. This is Anthranilate synthase component 1 3 (trpE3) from Haloarcula marismortui (strain ATCC 43049 / DSM 3752 / JCM 8966 / VKM B-1809) (Halobacterium marismortui).